The following is a 145-amino-acid chain: Ribosomal RNA large subunit methyltransferase H (145 aa).

S-adenosyl-L-methionine-binding positions include Leu-64, Gly-93, and 112 to 117 (LSPLTF).

This sequence belongs to the RNA methyltransferase RlmH family. Homodimer.

The protein resides in the cytoplasm. The catalysed reaction is pseudouridine(1915) in 23S rRNA + S-adenosyl-L-methionine = N(3)-methylpseudouridine(1915) in 23S rRNA + S-adenosyl-L-homocysteine + H(+). Its function is as follows. Specifically methylates the pseudouridine at position 1915 (m3Psi1915) in 23S rRNA. This Prochlorococcus marinus (strain NATL2A) protein is Ribosomal RNA large subunit methyltransferase H.